Consider the following 362-residue polypeptide: N-acylethanolamine-hydrolyzing acid amidase (362 aa).

Positions 1–33 (MGTPAIRAACHGAHLALALLLLLSLSDPWLWAT) are cleaved as a signal peptide. 2 N-linked (GlcNAc...) asparagine glycosylation sites follow: Asn42 and Asn112. Cys131 functions as the Nucleophile in the catalytic mechanism. N-linked (GlcNAc...) asparagine glycosylation is found at Asn314 and Asn338.

Belongs to the acid ceramidase family. As to quaternary structure, heterodimer of an alpha and a beta subunit, produced by autocatalytic cleavage. Post-translationally, N-glycosylated. Tunicamycin treatment causes a reduction in specific activity against N-palmitoylethanolamine. Autoproteolytic cleavage at pH 4.5 gives rise to the alpha and beta subunit. Cleavage gives rise to a conformation change that activates the enzyme. The same catalytic Cys residue mediates the autoproteolytic cleavage and subsequent hydrolysis of lipid substrates. As to expression, expressed in brain, cecum, colon, heart, ileum, kidney, liver, lung, spleen, stomach, submaxillary gland, testis and thymus.

The protein resides in the lysosome. The protein localises to the membrane. The catalysed reaction is N-hexadecanoylethanolamine + H2O = ethanolamine + hexadecanoate. It catalyses the reaction an N-(long-chain fatty acyl)ethanolamine + H2O = a long-chain fatty acid + ethanolamine. The enzyme catalyses N-dodecanoylethanolamine + H2O = dodecanoate + ethanolamine. It carries out the reaction N-tetradecanoylethanolamine + H2O = tetradecanoate + ethanolamine. The catalysed reaction is an N-acylsphing-4-enine + H2O = sphing-4-enine + a fatty acid. It catalyses the reaction N-hexadecanoylsphing-4-enine + H2O = sphing-4-enine + hexadecanoate. The enzyme catalyses N-dodecanoylsphing-4-enine + H2O = dodecanoate + sphing-4-enine. It participates in lipid metabolism; fatty acid metabolism. Stimulated by DTT. Stimulated by nonionic detergent of the polyoxyethylenep-t-octylphenylether type (Triton X-100 or Nonidet P-40) whereas 3-[(3-cholamidopropyl)dimethylammonio]propane-1-sulfonate (CHAPS) and octyl alpha-D-glucopyranoside decrease the N-(long-chain-acyl)ethanolamine deacylase activity. Polysorbate 20 (Tween 20) is inhibitory. Stimulated by endogenous phospholipids such as choline- or ethanolamine-containing phospholipids, and dihydrolipoic acid. Functionally, degrades bioactive fatty acid amides to their corresponding acids, with the following preference: N-palmitoylethanolamine &gt; N-myristoylethanolamine &gt; N-stearoylethanolamine &gt; N-oleoylethanolamine &gt; N-linoleoylethanolamine &gt; N-arachidonoylethanolamine. In Rattus norvegicus (Rat), this protein is N-acylethanolamine-hydrolyzing acid amidase.